Consider the following 401-residue polypeptide: Argininosuccinate synthase (401 aa).

ATP is bound by residues 11–19 (AYSGGLDTS) and alanine 38. Positions 89 and 94 each coordinate L-citrulline. Glycine 119 lines the ATP pocket. L-aspartate is bound by residues threonine 121, asparagine 125, and aspartate 126. Asparagine 125 provides a ligand contact to L-citrulline. The L-citrulline site is built by arginine 129, serine 180, serine 189, glutamate 265, and tyrosine 277.

This sequence belongs to the argininosuccinate synthase family. Type 1 subfamily. Homotetramer.

The protein localises to the cytoplasm. It carries out the reaction L-citrulline + L-aspartate + ATP = 2-(N(omega)-L-arginino)succinate + AMP + diphosphate + H(+). It functions in the pathway amino-acid biosynthesis; L-arginine biosynthesis; L-arginine from L-ornithine and carbamoyl phosphate: step 2/3. The sequence is that of Argininosuccinate synthase from Syntrophus aciditrophicus (strain SB).